The sequence spans 295 residues: N-acetylmuramic acid 6-phosphate etherase (295 aa).

One can recognise an SIS domain in the interval 55–218 (AADALKQGGR…STGAMVKLGK (164 aa)). Residue Glu-83 is the Proton donor of the active site. Glu-114 is an active-site residue.

It belongs to the GCKR-like family. MurNAc-6-P etherase subfamily. In terms of assembly, homodimer.

It catalyses the reaction N-acetyl-D-muramate 6-phosphate + H2O = N-acetyl-D-glucosamine 6-phosphate + (R)-lactate. It functions in the pathway amino-sugar metabolism; 1,6-anhydro-N-acetylmuramate degradation. Its pathway is amino-sugar metabolism; N-acetylmuramate degradation. It participates in cell wall biogenesis; peptidoglycan recycling. Its function is as follows. Specifically catalyzes the cleavage of the D-lactyl ether substituent of MurNAc 6-phosphate, producing GlcNAc 6-phosphate and D-lactate. Together with AnmK, is also required for the utilization of anhydro-N-acetylmuramic acid (anhMurNAc) either imported from the medium or derived from its own cell wall murein, and thus plays a role in cell wall recycling. In Yersinia pseudotuberculosis serotype O:1b (strain IP 31758), this protein is N-acetylmuramic acid 6-phosphate etherase.